We begin with the raw amino-acid sequence, 333 residues long: Glycerol-3-phosphate dehydrogenase [NAD(P)+] (333 aa).

S10, W11, H31, R32, and K105 together coordinate NADPH. Sn-glycerol 3-phosphate is bound by residues K105, G136, and S138. A140 is a binding site for NADPH. 5 residues coordinate sn-glycerol 3-phosphate: K191, D244, S254, R255, and N256. The active-site Proton acceptor is K191. Residue R255 participates in NADPH binding. NADPH contacts are provided by V279 and E281.

It belongs to the NAD-dependent glycerol-3-phosphate dehydrogenase family.

The protein localises to the cytoplasm. It catalyses the reaction sn-glycerol 3-phosphate + NAD(+) = dihydroxyacetone phosphate + NADH + H(+). The catalysed reaction is sn-glycerol 3-phosphate + NADP(+) = dihydroxyacetone phosphate + NADPH + H(+). It participates in membrane lipid metabolism; glycerophospholipid metabolism. Its function is as follows. Catalyzes the reduction of the glycolytic intermediate dihydroxyacetone phosphate (DHAP) to sn-glycerol 3-phosphate (G3P), the key precursor for phospholipid synthesis. The protein is Glycerol-3-phosphate dehydrogenase [NAD(P)+] of Chlorobium phaeobacteroides (strain DSM 266 / SMG 266 / 2430).